The sequence spans 85 residues: MTKVVNNLQDIFLNGARKNRIPVTIYLTNGFQLKGFVKGFDNFTVILDSDGKQMMIYKHAISTINPAKPLLFVQNPNGDDYKDKE.

The Sm domain occupies 10–70; it reads DIFLNGARKN…ISTINPAKPL (61 aa).

The protein belongs to the Hfq family. As to quaternary structure, homohexamer.

In terms of biological role, RNA chaperone that binds small regulatory RNA (sRNAs) and mRNAs to facilitate mRNA translational regulation in response to envelope stress, environmental stress and changes in metabolite concentrations. Also binds with high specificity to tRNAs. The polypeptide is RNA-binding protein Hfq (Clostridium botulinum (strain 657 / Type Ba4)).